The primary structure comprises 210 residues: Small ribosomal subunit protein uS3 (210 aa).

The KH type-2 domain occupies 38–106 (IRAWLKKRLA…EVQINIVEIR (69 aa)).

It belongs to the universal ribosomal protein uS3 family. Part of the 30S ribosomal subunit. Forms a tight complex with proteins S10 and S14.

In terms of biological role, binds the lower part of the 30S subunit head. Binds mRNA in the 70S ribosome, positioning it for translation. The protein is Small ribosomal subunit protein uS3 of Magnetococcus marinus (strain ATCC BAA-1437 / JCM 17883 / MC-1).